Consider the following 191-residue polypeptide: Adenylate kinase (191 aa).

Residue 10-15 participates in ATP binding; it reads AAGKGT. The NMP stretch occupies residues 30–59; it reads STGDMLRAAIASGSELGQRVKGVLDRGELV. AMP contacts are provided by residues Thr-31, Arg-36, 57–59, 85–88, and Gln-92; these read ELV and GFPR. Positions 126–136 are LID; the sequence is KRFEEQGRPDD. Arg-127 contributes to the ATP binding site. 2 residues coordinate AMP: Arg-133 and Arg-144. Gly-172 contacts ATP.

Belongs to the adenylate kinase family. As to quaternary structure, monomer.

It is found in the cytoplasm. The catalysed reaction is AMP + ATP = 2 ADP. It participates in purine metabolism; AMP biosynthesis via salvage pathway; AMP from ADP: step 1/1. Catalyzes the reversible transfer of the terminal phosphate group between ATP and AMP. Plays an important role in cellular energy homeostasis and in adenine nucleotide metabolism. The chain is Adenylate kinase from Caulobacter vibrioides (strain ATCC 19089 / CIP 103742 / CB 15) (Caulobacter crescentus).